The chain runs to 81 residues: Small ribosomal subunit protein bS18 (81 aa).

Belongs to the bacterial ribosomal protein bS18 family. As to quaternary structure, part of the 30S ribosomal subunit. Forms a tight heterodimer with protein bS6.

Binds as a heterodimer with protein bS6 to the central domain of the 16S rRNA, where it helps stabilize the platform of the 30S subunit. The chain is Small ribosomal subunit protein bS18 from Lactococcus lactis subsp. cremoris (strain MG1363).